We begin with the raw amino-acid sequence, 379 residues long: Glucose-1-phosphate adenylyltransferase (379 aa).

Alpha-D-glucose 1-phosphate contacts are provided by residues glycine 164, glutamate 179–lysine 180, and serine 190.

Belongs to the bacterial/plant glucose-1-phosphate adenylyltransferase family. Homotetramer.

It catalyses the reaction alpha-D-glucose 1-phosphate + ATP + H(+) = ADP-alpha-D-glucose + diphosphate. It functions in the pathway glycan biosynthesis; glycogen biosynthesis. Involved in the biosynthesis of ADP-glucose, a building block required for the elongation reactions to produce glycogen. Catalyzes the reaction between ATP and alpha-D-glucose 1-phosphate (G1P) to produce pyrophosphate and ADP-Glc. This chain is Glucose-1-phosphate adenylyltransferase, found in Streptococcus equi subsp. zooepidemicus (strain H70).